Reading from the N-terminus, the 204-residue chain is MRYSSGAVEALIEEFAKLPGIGRKTAQRLTMHVLHERRSEVEKLASALIDVKEKVIRCSVCQNITDLGVDPCHICTSAGRDRSVICVVESPTEVLAFEKTGHYKGLYHVLHGVISPLDGVGPDDIKVRELIARIGVDSTGGVREVVLALNPTVEGETTSLYISKLLKPLGINVTRIARGIPVGAELEFIDEATLSRAMEGRSAI.

The C4-type zinc-finger motif lies at 58 to 75 (CSVCQNITDLGVDPCHIC). The Toprim domain occupies 83-181 (SVICVVESPT…NVTRIARGIP (99 aa)).

The protein belongs to the RecR family.

Functionally, may play a role in DNA repair. It seems to be involved in an RecBC-independent recombinational process of DNA repair. It may act with RecF and RecO. The polypeptide is Recombination protein RecR (Chlorobaculum tepidum (strain ATCC 49652 / DSM 12025 / NBRC 103806 / TLS) (Chlorobium tepidum)).